We begin with the raw amino-acid sequence, 233 residues long: DNA-directed RNA polymerase V subunit 5C (233 aa).

Belongs to the archaeal Rpo5/eukaryotic RPB5 RNA polymerase subunit family. As to quaternary structure, component of the RNA polymerase V complex. As to expression, expressed in flower buds and siliques.

It localises to the nucleus. Functionally, DNA-dependent RNA polymerase catalyzes the transcription of DNA into RNA using the four ribonucleoside triphosphates as substrates. Component of RNA polymerase V involved in RNA-directed DNA methylation-dependent (RdDM) silencing of endogenous repeated sequences, including transposable elements. The protein is DNA-directed RNA polymerase V subunit 5C (NRPE5C) of Arabidopsis thaliana (Mouse-ear cress).